The sequence spans 195 residues: MMEKSKPNVVFVLGGPGSGKGTQCANIVRDFGWVHLSAGDLLRQEQQSGSKDGEMIATMIKNGEIVPSIVTVKLLKNAIDANQGKNFLVDGFPRNEENNNSWEENMKDFVDTKFVLFFDCPEEVMTQRLLKRGESSGRSDDNIESIKKRFNTFNVQTKLVIDHYNKFDKVKIIPANRDVNEVYNDVENLFKSMGF.

Position 17 to 22 (17 to 22 (GSGKGT)) interacts with ATP. The segment at 37–66 (SAGDLLRQEQQSGSKDGEMIATMIKNGEIV) is NMP. A ribonucleoside 5'-phosphate contacts are provided by residues Arg43, 64–66 (EIV), and 91–94 (GFPR). Asn98 serves as a coordination point for CMP. The tract at residues 131–141 (KRGESSGRSDD) is LID. ATP is bound at residue Arg132. Residues Arg138 and Arg149 each contribute to the a ribonucleoside 5'-phosphate site. Position 177 (Arg177) interacts with ATP.

This sequence belongs to the adenylate kinase family. UMP-CMP kinase subfamily. As to quaternary structure, monomer. Mg(2+) is required as a cofactor.

The protein resides in the cytoplasm. Its subcellular location is the nucleus. The enzyme catalyses CMP + ATP = CDP + ADP. The catalysed reaction is dCMP + ATP = dCDP + ADP. It carries out the reaction UMP + ATP = UDP + ADP. Functionally, catalyzes the phosphorylation of pyrimidine nucleoside monophosphates at the expense of ATP. Plays an important role in de novo pyrimidine nucleotide biosynthesis. Has preference for UMP and CMP as phosphate acceptors. The protein is UMP-CMP kinase of Dictyostelium discoideum (Social amoeba).